The primary structure comprises 663 residues: Putative ankyrin repeat protein R219 (663 aa).

5 ANK repeats span residues 91-118 (FRIK…GYKV), 119-148 (DFDS…KLSS), 200-229 (ANQQ…KDGT), 258-288 (DWHV…KINP), and 322-351 (YFSH…GITV).

In Acanthamoeba polyphaga mimivirus (APMV), this protein is Putative ankyrin repeat protein R219.